Reading from the N-terminus, the 482-residue chain is tRNA sulfurtransferase (482 aa).

The THUMP domain maps to 61–165; the sequence is LAIRDALTRI…DDRLLLIKGR (105 aa). ATP is bound by residues 183 to 184, Lys265, Gly287, and Gln296; that span reads LI. Cys344 and Cys456 are disulfide-bonded. The 79-residue stretch at 404–482 folds into the Rhodanese domain; that stretch reads FGPNDVILDI…GFNNVKVYRP (79 aa). Catalysis depends on Cys456, which acts as the Cysteine persulfide intermediate.

It belongs to the ThiI family.

Its subcellular location is the cytoplasm. The enzyme catalyses [ThiI sulfur-carrier protein]-S-sulfanyl-L-cysteine + a uridine in tRNA + 2 reduced [2Fe-2S]-[ferredoxin] + ATP + H(+) = [ThiI sulfur-carrier protein]-L-cysteine + a 4-thiouridine in tRNA + 2 oxidized [2Fe-2S]-[ferredoxin] + AMP + diphosphate. It carries out the reaction [ThiS sulfur-carrier protein]-C-terminal Gly-Gly-AMP + S-sulfanyl-L-cysteinyl-[cysteine desulfurase] + AH2 = [ThiS sulfur-carrier protein]-C-terminal-Gly-aminoethanethioate + L-cysteinyl-[cysteine desulfurase] + A + AMP + 2 H(+). Its pathway is cofactor biosynthesis; thiamine diphosphate biosynthesis. Functionally, catalyzes the ATP-dependent transfer of a sulfur to tRNA to produce 4-thiouridine in position 8 of tRNAs, which functions as a near-UV photosensor. Also catalyzes the transfer of sulfur to the sulfur carrier protein ThiS, forming ThiS-thiocarboxylate. This is a step in the synthesis of thiazole, in the thiamine biosynthesis pathway. The sulfur is donated as persulfide by IscS. The chain is tRNA sulfurtransferase from Escherichia coli O9:H4 (strain HS).